The chain runs to 359 residues: Stearoyl-CoA desaturase (359 aa).

The Cytoplasmic portion of the chain corresponds to 1–72 (MPAHLLQEEI…EGPKPKLEYV (72 aa)). Residues 73-93 (WRNIILMSLLHLGALYGITLI) form a helical membrane-spanning segment. Asn75 lines the substrate pocket. Residues 94–97 (PTCK) lie on the Lumenal side of the membrane. Residues 98-118 (IYTYIWVLFYYLMGALGITAG) form a helical membrane-spanning segment. Residues 119-217 (AHRLWSHRTY…EKLVMFQRRY (99 aa)) are Cytoplasmic-facing. Fe cation contacts are provided by His120 and His125. The Histidine box-1 motif lies at 120–125 (HRLWSH). 3 residues coordinate substrate: Asn148, Arg155, and Asp156. The Fe cation site is built by His157, His160, and His161. A Histidine box-2 motif is present at residues 157-161 (HRAHH). Substrate is bound by residues Arg188 and Lys189. Phosphoserine is present on residues Ser198 and Ser203. Residues 218-237 (YKPGVLLLCFILPTLVPWYL) traverse the membrane as a helical segment. At 238-241 (WDET) the chain is on the lumenal side. Residues 242–263 (FQNSLFFATLFRYALGLNVTWL) form a helical membrane-spanning segment. Trp262 provides a ligand contact to substrate. The Cytoplasmic segment spans residues 264–359 (VNSAAHMYGY…RTGEESYKSG (96 aa)). Fe cation contacts are provided by His269, His298, His301, and His302. Positions 298–302 (HNYHH) match the Histidine box-3 motif.

This sequence belongs to the fatty acid desaturase type 1 family. Fe(2+) is required as a cofactor.

It localises to the endoplasmic reticulum membrane. The catalysed reaction is octadecanoyl-CoA + 2 Fe(II)-[cytochrome b5] + O2 + 2 H(+) = (9Z)-octadecenoyl-CoA + 2 Fe(III)-[cytochrome b5] + 2 H2O. It carries out the reaction hexadecanoyl-CoA + 2 Fe(II)-[cytochrome b5] + O2 + 2 H(+) = (9Z)-hexadecenoyl-CoA + 2 Fe(III)-[cytochrome b5] + 2 H2O. Stearoyl-CoA desaturase that utilizes O(2) and electrons from reduced cytochrome b5 to introduce the first double bond into saturated fatty acyl-CoA substrates. Catalyzes the insertion of a cis double bond at the delta-9 position into fatty acyl-CoA substrates including palmitoyl-CoA and stearoyl-CoA. Gives rise to a mixture of 16:1 and 18:1 unsaturated fatty acids. Plays an important role in lipid biosynthesis. Plays an important role in regulating the expression of genes that are involved in lipogenesis and in regulating mitochondrial fatty acid oxidation. Plays an important role in body energy homeostasis. Contributes to the biosynthesis of membrane phospholipids, cholesterol esters and triglycerides. The polypeptide is Stearoyl-CoA desaturase (SCD) (Bos taurus (Bovine)).